The chain runs to 245 residues: Probable transcriptional regulatory protein MARTH_orf271 (245 aa).

Belongs to the TACO1 family.

The protein localises to the cytoplasm. The chain is Probable transcriptional regulatory protein MARTH_orf271 from Metamycoplasma arthritidis (strain 158L3-1) (Mycoplasma arthritidis).